Consider the following 82-residue polypeptide: Small ribosomal subunit protein bS16 (82 aa).

It belongs to the bacterial ribosomal protein bS16 family.

This Aliivibrio fischeri (strain ATCC 700601 / ES114) (Vibrio fischeri) protein is Small ribosomal subunit protein bS16.